Reading from the N-terminus, the 464-residue chain is MAVYNYDVVILGTGPAGEGAAMNASKYGRKLAVVDSRRVVGGNCTHLGTIPSKALRHSVKQIIEFNTNPMFRQIGEPRWFSFPDVLKSADRVISKQVASRTGYYARNRIDMFTGTASFVDERTVEVVTPSGAVERLVADQFVIATGSRPYRPSDINFNHPRVYDSDTILSLSHTPRRLIIYGAGVIGCEYASIFSGLGVLVDLIDTRDQLLSFLDDEISDALSYHLRNNNVLIRHNEEYERVEGLDNGVILHLKSGKKIKADALLWCNGRTGNTDKLGLENVGIKVNSRGQVEVDENYRTSVSNIFAAGDVIGWPSLASAAYDQGRSAAGNIVESDSWRFVNDVPTGIYTIPEISSIGKNESELTAAKIPYEVGKAFFKGMARAQISNEPVGMLKILFHRETLEILGVHCFGDQASEIVHIGQAIMNQPGELNTLKYFVNTTFNYPTMAEAYRVAAFDGLNRLF.

Residue 35–44 (DSRRVVGGNC) coordinates FAD.

This sequence belongs to the class-I pyridine nucleotide-disulfide oxidoreductase family. FAD is required as a cofactor.

It localises to the cytoplasm. The enzyme catalyses NAD(+) + NADPH = NADH + NADP(+). Conversion of NADPH, generated by peripheral catabolic pathways, to NADH, which can enter the respiratory chain for energy generation. This is Soluble pyridine nucleotide transhydrogenase from Pseudomonas paraeruginosa (strain DSM 24068 / PA7) (Pseudomonas aeruginosa (strain PA7)).